The primary structure comprises 249 residues: Deoxyribose-phosphate aldolase (249 aa).

Catalysis depends on Asp105, which acts as the Proton donor/acceptor. The active-site Schiff-base intermediate with acetaldehyde is the Lys168. Lys216 acts as the Proton donor/acceptor in catalysis.

The protein belongs to the DeoC/FbaB aldolase family. DeoC type 1 subfamily.

It localises to the cytoplasm. The enzyme catalyses 2-deoxy-D-ribose 5-phosphate = D-glyceraldehyde 3-phosphate + acetaldehyde. It participates in carbohydrate degradation; 2-deoxy-D-ribose 1-phosphate degradation; D-glyceraldehyde 3-phosphate and acetaldehyde from 2-deoxy-alpha-D-ribose 1-phosphate: step 2/2. Functionally, catalyzes a reversible aldol reaction between acetaldehyde and D-glyceraldehyde 3-phosphate to generate 2-deoxy-D-ribose 5-phosphate. The sequence is that of Deoxyribose-phosphate aldolase from Corynebacterium jeikeium (strain K411).